Here is a 103-residue protein sequence, read N- to C-terminus: Omega toxin Ap5 (103 aa).

The N-terminal stretch at 1-22 (MNTIQVILFAVVLVLTVTVGQA) is a signal peptide. Positions 23–57 (DEDSAETSLLRKLEEAEASMFGQYLEESKNSREKR) are excised as a propeptide. Cystine bridges form between cysteine 58–cysteine 73, cysteine 65–cysteine 78, and cysteine 72–cysteine 93.

Belongs to the neurotoxin 14 (magi-1) family. 08 (Ltx-4) subfamily. Expressed by the venom duct.

Its subcellular location is the secreted. Its function is as follows. Shows a weak inhibition on the voltage-gated calcium channel Cav2.1/CACNA1A and some voltage-gated sodium channels (with 1 uM toxin tested: 22.08% inhibition on Cav2.1/CACNA1A, 6.6% on Nav1.1/SCN1A, 4.2% on Nav1.5, and 16% on Nav1.7). Functionally, shows a weak inhibition on the voltage-gated calcium channel Cav2.1/CACNA1A (28.06% at 1 uM). In Acanthoscurria paulensis (Brazilian giant black tarantula spider), this protein is Omega toxin Ap5.